Here is a 491-residue protein sequence, read N- to C-terminus: Proline--tRNA ligase (491 aa).

This sequence belongs to the class-II aminoacyl-tRNA synthetase family. ProS type 3 subfamily. Homodimer.

Its subcellular location is the cytoplasm. It catalyses the reaction tRNA(Pro) + L-proline + ATP = L-prolyl-tRNA(Pro) + AMP + diphosphate. Its function is as follows. Catalyzes the attachment of proline to tRNA(Pro) in a two-step reaction: proline is first activated by ATP to form Pro-AMP and then transferred to the acceptor end of tRNA(Pro). This chain is Proline--tRNA ligase, found in Cytophaga hutchinsonii (strain ATCC 33406 / DSM 1761 / CIP 103989 / NBRC 15051 / NCIMB 9469 / D465).